The primary structure comprises 341 residues: L-threonine 3-dehydrogenase (341 aa).

Position 38 (cysteine 38) interacts with Zn(2+). Catalysis depends on charge relay system residues threonine 40 and histidine 43. Histidine 63, glutamate 64, cysteine 93, cysteine 96, cysteine 99, and cysteine 107 together coordinate Zn(2+). NAD(+) is bound by residues isoleucine 175, aspartate 195, arginine 200, leucine 262–isoleucine 264, and isoleucine 286–tyrosine 287.

It belongs to the zinc-containing alcohol dehydrogenase family. Homotetramer. Zn(2+) is required as a cofactor.

It localises to the cytoplasm. It carries out the reaction L-threonine + NAD(+) = (2S)-2-amino-3-oxobutanoate + NADH + H(+). The protein operates within amino-acid degradation; L-threonine degradation via oxydo-reductase pathway; glycine from L-threonine: step 1/2. In terms of biological role, catalyzes the NAD(+)-dependent oxidation of L-threonine to 2-amino-3-ketobutyrate. In Escherichia coli O157:H7, this protein is L-threonine 3-dehydrogenase.